The primary structure comprises 360 residues: Peptide chain release factor 1 (360 aa).

An N5-methylglutamine modification is found at Q235. A compositionally biased stretch (basic and acidic residues) spans 285–295 (RQAAEQTDMRR). Residues 285-309 (RQAAEQTDMRRNLLGSGDRSDKIRT) form a disordered region.

Belongs to the prokaryotic/mitochondrial release factor family. In terms of processing, methylated by PrmC. Methylation increases the termination efficiency of RF1.

It is found in the cytoplasm. Functionally, peptide chain release factor 1 directs the termination of translation in response to the peptide chain termination codons UAG and UAA. This is Peptide chain release factor 1 from Haemophilus influenzae (strain 86-028NP).